A 40-amino-acid polypeptide reads, in one-letter code: MKVRKSLRSLKKKPGAQVIRRHGKVFVINKKDPRFKARQG.

Belongs to the bacterial ribosomal protein bL36 family.

The sequence is that of Large ribosomal subunit protein bL36 from Corynebacterium aurimucosum (strain ATCC 700975 / DSM 44827 / CIP 107346 / CN-1) (Corynebacterium nigricans).